The primary structure comprises 324 residues: Viral cathepsin (324 aa).

The signal sequence occupies residues 1–16 (MNKIVLYLLVYGATLG). The propeptide at 17–113 (AAYDLLKAPS…VVLDRPPDKG (97 aa)) is activation peptide. Disulfide bonds link cysteine 134/cysteine 175, cysteine 168/cysteine 208, and cysteine 263/cysteine 311. Cysteine 137 is a catalytic residue. N-linked (GlcNAc...) asparagine; by host glycosylation occurs at asparagine 159. Residues histidine 270 and asparagine 290 contribute to the active site.

This sequence belongs to the peptidase C1 family. Post-translationally, synthesized as an inactive proenzyme and activated by proteolytic removal of the inhibitory propeptide.

It carries out the reaction Endopeptidase of broad specificity, hydrolyzing substrates of both cathepsin L and cathepsin B.. Functionally, cysteine protease that plays an essential role in host liquefaction to facilitate horizontal transmission of the virus. May participate in the degradation of foreign protein expressed by the baculovirus system. The sequence is that of Viral cathepsin (VCATH) from Antheraea pernyi nuclear polyhedrosis virus (ApNPV).